Reading from the N-terminus, the 324-residue chain is Elongation factor P--(R)-beta-lysine ligase (324 aa).

A substrate-binding site is contributed by 75 to 77 (SPE). ATP-binding positions include 99-101 (RNK) and asparagine 108. Residue tyrosine 117 coordinates substrate. 243-244 (EL) provides a ligand contact to ATP. Glutamate 250 is a substrate binding site. Glycine 299 is an ATP binding site.

This sequence belongs to the class-II aminoacyl-tRNA synthetase family. EpmA subfamily. As to quaternary structure, homodimer.

The enzyme catalyses D-beta-lysine + L-lysyl-[protein] + ATP = N(6)-((3R)-3,6-diaminohexanoyl)-L-lysyl-[protein] + AMP + diphosphate + H(+). Functionally, with EpmB is involved in the beta-lysylation step of the post-translational modification of translation elongation factor P (EF-P). Catalyzes the ATP-dependent activation of (R)-beta-lysine produced by EpmB, forming a lysyl-adenylate, from which the beta-lysyl moiety is then transferred to the epsilon-amino group of a conserved specific lysine residue in EF-P. In Buchnera aphidicola subsp. Acyrthosiphon pisum (strain APS) (Acyrthosiphon pisum symbiotic bacterium), this protein is Elongation factor P--(R)-beta-lysine ligase.